A 429-amino-acid polypeptide reads, in one-letter code: Ribosomal RNA small subunit methyltransferase B (429 aa).

S-adenosyl-L-methionine-binding positions include 254 to 260 (CAAPGGK), aspartate 277, aspartate 303, and aspartate 322. Cysteine 375 functions as the Nucleophile in the catalytic mechanism.

It belongs to the class I-like SAM-binding methyltransferase superfamily. RsmB/NOP family.

Its subcellular location is the cytoplasm. The enzyme catalyses cytidine(967) in 16S rRNA + S-adenosyl-L-methionine = 5-methylcytidine(967) in 16S rRNA + S-adenosyl-L-homocysteine + H(+). Functionally, specifically methylates the cytosine at position 967 (m5C967) of 16S rRNA. This Shigella flexneri serotype 5b (strain 8401) protein is Ribosomal RNA small subunit methyltransferase B.